The sequence spans 213 residues: Holliday junction resolvase RecU (213 aa).

4 residues coordinate Mg(2+): threonine 98, aspartate 100, glutamate 113, and glutamine 132.

Belongs to the RecU family. The cofactor is Mg(2+).

The protein localises to the cytoplasm. The catalysed reaction is Endonucleolytic cleavage at a junction such as a reciprocal single-stranded crossover between two homologous DNA duplexes (Holliday junction).. In terms of biological role, endonuclease that resolves Holliday junction intermediates in genetic recombination. Cleaves mobile four-strand junctions by introducing symmetrical nicks in paired strands. Promotes annealing of linear ssDNA with homologous dsDNA. Required for DNA repair, homologous recombination and chromosome segregation. This is Holliday junction resolvase RecU from Ligilactobacillus salivarius (strain UCC118) (Lactobacillus salivarius).